We begin with the raw amino-acid sequence, 447 residues long: Probable alpha-galactosidase B (447 aa).

A signal peptide spans M1–R25. Intrachain disulfides connect C45-C77 and C127-C157. Catalysis depends on D155, which acts as the Nucleophile. Residues N162 and N180 are each glycosylated (N-linked (GlcNAc...) asparagine). Residue E225–A229 participates in substrate binding. An N-linked (GlcNAc...) asparagine glycan is attached at N236. The active-site Proton donor is D247. Residue N286 is glycosylated (N-linked (GlcNAc...) asparagine).

It belongs to the glycosyl hydrolase 27 family.

Its subcellular location is the secreted. The catalysed reaction is Hydrolysis of terminal, non-reducing alpha-D-galactose residues in alpha-D-galactosides, including galactose oligosaccharides, galactomannans and galactolipids.. Its function is as follows. Hydrolyzes a variety of simple alpha-D-galactoside as well as more complex molecules such as oligosaccharides and polysaccharides. The polypeptide is Probable alpha-galactosidase B (aglB) (Aspergillus fumigatus (strain ATCC MYA-4609 / CBS 101355 / FGSC A1100 / Af293) (Neosartorya fumigata)).